A 956-amino-acid polypeptide reads, in one-letter code: Translation initiation factor IF-2 (956 aa).

The disordered stretch occupies residues 68 to 357 (APEAAAPKAP…GVSVPRGDGN (290 aa)). Composition is skewed to low complexity over residues 86–123 (AKPA…APAV), 141–156 (PGNN…PRAG), 164–175 (PAAAPASGAGRP), and 212–235 (GPRP…RPAA). Gly residues-rich tracts occupy residues 236-257 (GSGG…GGGN) and 276-324 (RGAG…GAGR). Residues 325-334 (GKQRKSKRAK) are compositionally biased toward basic residues. Residues 449 to 620 (ARPPVVTVMG…AVMLTADAAL (172 aa)) enclose the tr-type G domain. The segment at 458-465 (GHVDHGKT) is G1. Residue 458-465 (GHVDHGKT) coordinates GTP. The tract at residues 483-487 (GITQH) is G2. Residues 508–511 (DTPG) form a G3 region. GTP contacts are provided by residues 508 to 512 (DTPGH) and 562 to 565 (NKID). Residues 562 to 565 (NKID) are G4. The segment at 598 to 600 (SAR) is G5.

The protein belongs to the TRAFAC class translation factor GTPase superfamily. Classic translation factor GTPase family. IF-2 subfamily.

The protein localises to the cytoplasm. Its function is as follows. One of the essential components for the initiation of protein synthesis. Protects formylmethionyl-tRNA from spontaneous hydrolysis and promotes its binding to the 30S ribosomal subunits. Also involved in the hydrolysis of GTP during the formation of the 70S ribosomal complex. The protein is Translation initiation factor IF-2 of Renibacterium salmoninarum (strain ATCC 33209 / DSM 20767 / JCM 11484 / NBRC 15589 / NCIMB 2235).